The chain runs to 507 residues: METLRADEISNIIRERIEQYNREVNIVNTGTVLQVGDGIARIHGLDEVMAGELVEFDEGTIGIALNLESNNVGVVLMGDGLMIQEGSSVKATGRIAQIPVSEAYLGRVINALAKPIDGRGEISASESRLIESPAPGIISRRSVYEPLQTGLIAIDSMIPIGRGQRELIIGDRQTGKTAVATDTILNQKGQNVICVYVAIGQKASSVAQVVTTFQEQGAMEYTIVVAETADSPATLQYLAPYTGAALAEYFMYREQHTSIIYDDPSKQAQAYRQMSLLLRRPPGREAYPGDVFYLHSRLLERAAKLNSSLGEGSMTALPIVETQSGDVSAYIPTNVISITDGQIFLSSDLFNAGIRPAINVGISVSRVGSAAQIKAMKQVAGKLKLELAQFAELEAFAQFASDLDKATQNQLARGQRLRELLKQSQSAPLAVEEQIVTIYTGANGYLDPLETGQVKKFLVQLRTYLKTNKPQFQEIISSTKIFTKDAEAILKEVIPEQIELFLLQEQT.

Residue 170 to 177 participates in ATP binding; it reads GDRQTGKT.

It belongs to the ATPase alpha/beta chains family. In terms of assembly, F-type ATPases have 2 components, CF(1) - the catalytic core - and CF(0) - the membrane proton channel. CF(1) has five subunits: alpha(3), beta(3), gamma(1), delta(1), epsilon(1). CF(0) has four main subunits: a, b, b' and c.

Its subcellular location is the plastid. The protein resides in the chloroplast thylakoid membrane. The catalysed reaction is ATP + H2O + 4 H(+)(in) = ADP + phosphate + 5 H(+)(out). In terms of biological role, produces ATP from ADP in the presence of a proton gradient across the membrane. The alpha chain is a regulatory subunit. The chain is ATP synthase subunit alpha, chloroplastic from Piper cenocladum (Ant piper).